The primary structure comprises 262 residues: Glucosamine-6-phosphate deaminase (262 aa).

The Proton acceptor; for enolization step role is filled by D63. N129 serves as the catalytic For ring-opening step. H131 serves as the catalytic Proton acceptor; for ring-opening step. E136 serves as the catalytic For ring-opening step.

This sequence belongs to the glucosamine/galactosamine-6-phosphate isomerase family. NagB subfamily.

It carries out the reaction alpha-D-glucosamine 6-phosphate + H2O = beta-D-fructose 6-phosphate + NH4(+). It functions in the pathway amino-sugar metabolism; N-acetylneuraminate degradation; D-fructose 6-phosphate from N-acetylneuraminate: step 5/5. Its function is as follows. Catalyzes the reversible isomerization-deamination of glucosamine 6-phosphate (GlcN6P) to form fructose 6-phosphate (Fru6P) and ammonium ion. The polypeptide is Glucosamine-6-phosphate deaminase (Bacillus cereus (strain G9842)).